A 339-amino-acid polypeptide reads, in one-letter code: uncharacterized protein (339 aa).

The ABC transporter domain occupies 13–243; it reads LSLNKLDVGF…PATPFICEFI (231 aa). Position 45–52 (45–52) interacts with ATP; sequence GPSGSGKS.

The protein belongs to the ABC transporter superfamily.

Its subcellular location is the cell inner membrane. Probably part of a binding-protein-dependent transport system y4fNOP. Probably responsible for energy coupling to the transport system. This is an uncharacterized protein from Sinorhizobium fredii (strain NBRC 101917 / NGR234).